A 470-amino-acid polypeptide reads, in one-letter code: Siroheme synthase (470 aa).

Residues 1 to 213 (MSDATDPGWF…GEHAAARQVL (213 aa)) form a precorrin-2 dehydrogenase /sirohydrochlorin ferrochelatase region. NAD(+) contacts are provided by residues 28-29 (GI) and 49-50 (PR). The interval 224–470 (GEVWLVGAGP…VVTPPPLSGT (247 aa)) is uroporphyrinogen-III C-methyltransferase. P233 lines the S-adenosyl-L-methionine pocket. D256 serves as the catalytic Proton acceptor. K278 functions as the Proton donor in the catalytic mechanism. S-adenosyl-L-methionine contacts are provided by residues 309–311 (GGD), I314, 339–340 (TA), M392, and G421.

In the N-terminal section; belongs to the precorrin-2 dehydrogenase / sirohydrochlorin ferrochelatase family. It in the C-terminal section; belongs to the precorrin methyltransferase family.

It catalyses the reaction uroporphyrinogen III + 2 S-adenosyl-L-methionine = precorrin-2 + 2 S-adenosyl-L-homocysteine + H(+). The enzyme catalyses precorrin-2 + NAD(+) = sirohydrochlorin + NADH + 2 H(+). It carries out the reaction siroheme + 2 H(+) = sirohydrochlorin + Fe(2+). The protein operates within cofactor biosynthesis; adenosylcobalamin biosynthesis; precorrin-2 from uroporphyrinogen III: step 1/1. It participates in cofactor biosynthesis; adenosylcobalamin biosynthesis; sirohydrochlorin from precorrin-2: step 1/1. It functions in the pathway porphyrin-containing compound metabolism; siroheme biosynthesis; precorrin-2 from uroporphyrinogen III: step 1/1. Its pathway is porphyrin-containing compound metabolism; siroheme biosynthesis; siroheme from sirohydrochlorin: step 1/1. The protein operates within porphyrin-containing compound metabolism; siroheme biosynthesis; sirohydrochlorin from precorrin-2: step 1/1. Multifunctional enzyme that catalyzes the SAM-dependent methylations of uroporphyrinogen III at position C-2 and C-7 to form precorrin-2 via precorrin-1. Then it catalyzes the NAD-dependent ring dehydrogenation of precorrin-2 to yield sirohydrochlorin. Finally, it catalyzes the ferrochelation of sirohydrochlorin to yield siroheme. The sequence is that of Siroheme synthase from Gluconacetobacter diazotrophicus (strain ATCC 49037 / DSM 5601 / CCUG 37298 / CIP 103539 / LMG 7603 / PAl5).